A 282-amino-acid polypeptide reads, in one-letter code: Inositol oxygenase (282 aa).

The interval Met1–Phe25 is disordered. The segment covering Pro12–Ser24 has biased composition (basic and acidic residues). Position 26 (Arg26) interacts with substrate. The residue at position 30 (Ser30) is a Phosphoserine. Asp82–Ser84 is a binding site for substrate. His95, His120, and Asp121 together coordinate Fe cation. Substrate is bound by residues Lys124 and Gly138–Asp139. 3 residues coordinate Fe cation: His191, His217, and Asp250. Substrate is bound at residue His217–Ser218.

Belongs to the myo-inositol oxygenase family. Fe cation is required as a cofactor. In terms of processing, the N-terminus is blocked. In terms of tissue distribution, kidney specific.

The protein resides in the cytoplasm. The catalysed reaction is myo-inositol + O2 = D-glucuronate + H2O + H(+). The protein operates within polyol metabolism; myo-inositol degradation into D-glucuronate; D-glucuronate from myo-inositol: step 1/1. The chain is Inositol oxygenase (MIOX) from Sus scrofa (Pig).